The following is a 305-amino-acid chain: Aspartate carbamoyltransferase catalytic subunit (305 aa).

Carbamoyl phosphate is bound by residues arginine 54 and threonine 55. L-aspartate is bound at residue lysine 83. 3 residues coordinate carbamoyl phosphate: arginine 104, histidine 132, and glutamine 135. Arginine 165 and arginine 226 together coordinate L-aspartate. Positions 265 and 266 each coordinate carbamoyl phosphate.

The protein belongs to the aspartate/ornithine carbamoyltransferase superfamily. ATCase family. As to quaternary structure, heterooligomer of catalytic and regulatory chains.

The catalysed reaction is carbamoyl phosphate + L-aspartate = N-carbamoyl-L-aspartate + phosphate + H(+). It functions in the pathway pyrimidine metabolism; UMP biosynthesis via de novo pathway; (S)-dihydroorotate from bicarbonate: step 2/3. Its function is as follows. Catalyzes the condensation of carbamoyl phosphate and aspartate to form carbamoyl aspartate and inorganic phosphate, the committed step in the de novo pyrimidine nucleotide biosynthesis pathway. The polypeptide is Aspartate carbamoyltransferase catalytic subunit (Pyrobaculum calidifontis (strain DSM 21063 / JCM 11548 / VA1)).